We begin with the raw amino-acid sequence, 648 residues long: Biosynthetic arginine decarboxylase (648 aa).

K109 bears the N6-(pyridoxal phosphate)lysine mark. 291-301 (IDVGGGLGIDF) is a binding site for substrate.

Belongs to the Orn/Lys/Arg decarboxylase class-II family. SpeA subfamily. Mg(2+) serves as cofactor. Pyridoxal 5'-phosphate is required as a cofactor.

It carries out the reaction L-arginine + H(+) = agmatine + CO2. Its pathway is amine and polyamine biosynthesis; agmatine biosynthesis; agmatine from L-arginine: step 1/1. Its function is as follows. Catalyzes the biosynthesis of agmatine from arginine. The protein is Biosynthetic arginine decarboxylase of Prochlorococcus marinus (strain MIT 9515).